A 450-amino-acid chain; its full sequence is Glutamate-1-semialdehyde 2,1-aminomutase (450 aa).

An N6-(pyridoxal phosphate)lysine modification is found at lysine 262.

The protein belongs to the class-III pyridoxal-phosphate-dependent aminotransferase family. HemL subfamily. In terms of assembly, homodimer. Pyridoxal 5'-phosphate is required as a cofactor.

It localises to the cytoplasm. The enzyme catalyses (S)-4-amino-5-oxopentanoate = 5-aminolevulinate. Its pathway is porphyrin-containing compound metabolism; protoporphyrin-IX biosynthesis; 5-aminolevulinate from L-glutamyl-tRNA(Glu): step 2/2. The protein is Glutamate-1-semialdehyde 2,1-aminomutase of Campylobacter hominis (strain ATCC BAA-381 / DSM 21671 / CCUG 45161 / LMG 19568 / NCTC 13146 / CH001A).